The primary structure comprises 962 residues: Oncostatin-M-specific receptor subunit beta (962 aa).

The first 28 residues, 1–28, serve as a signal peptide directing secretion; the sequence is MAFSVVLHQVTFLLAVLSLRTSQSKVLG. Residues 29–738 lie on the Extracellular side of the membrane; it reads EPLQLTPEIH…VTTPDVRSHM (710 aa). An N-linked (GlcNAc...) asparagine glycan is attached at Asn-219. Fibronectin type-III domains follow at residues 237–332, 333–426, 428–527, 528–621, and 623–734; these read EPKN…VHPK, APHD…TPEA, PSEA…SGHE, EVHE…TQEL, and PSVN…TPDV. Cys-243 and Cys-253 are joined by a disulfide. Asn-324 carries an N-linked (GlcNAc...) asparagine glycan. The WSXWS motif signature appears at 413-417; sequence WSDWM. 3 N-linked (GlcNAc...) asparagine glycosylation sites follow: Asn-492, Asn-578, and Asn-723. Residues 739 to 759 form a helical membrane-spanning segment; sequence LLQIILPMTLGVFLSIIVCYW. Topologically, residues 760-962 are cytoplasmic; sequence KSQWVKEKCY…ASLKENNLTS (203 aa). The Box 1 motif motif lies at 768–776; it reads CYPDIPNPY. Residues 818–840 are disordered; sequence VGSGKLHTEDVPTKPPLVPTEKD.

It belongs to the type I cytokine receptor family. Type 2 subfamily. As to quaternary structure, heterodimer composed of OSMR and IL6ST (type II OSM receptor). Heterodimer with IL31RA to form the IL31 receptor. Widely expressed. Expressed at high levels in the liver, skin and spleen. In the liver it is expressed exclusively in the oval cells.

The protein resides in the membrane. Associates with IL31RA to form the IL31 receptor. Binds IL31 and activates STAT1, STAT3 and STAT5. Capable of transducing OSM-specific signaling events. The OSM/OSM-R system is pivotal in the differentiation of oval cells into hepatocytes, thereby promoting liver regeneration. The polypeptide is Oncostatin-M-specific receptor subunit beta (Osmr) (Rattus norvegicus (Rat)).